The primary structure comprises 188 residues: Protein ORFV073 (188 aa).

As to quaternary structure, interacts with host IKBKG; this interaction inhibits host NF-kappa-B pathway activation.

The protein localises to the host nucleus. It localises to the host cytoplasm. Its subcellular location is the host perinuclear region. The protein resides in the virion. In terms of biological role, plays a role in the inhibition of the host NF-kappa-B pathway early during infection. Prevents the host RELA subunit from reaching the nucleus and activate transcription. The sequence is that of Protein ORFV073 from Capra hircus (Goat).